Here is a 291-residue protein sequence, read N- to C-terminus: Ribonuclease Z (291 aa).

Residues histidine 61, histidine 63, aspartate 65, histidine 66, histidine 133, aspartate 201, and histidine 257 each coordinate Zn(2+). Aspartate 65 (proton acceptor) is an active-site residue.

Belongs to the RNase Z family. Homodimer. The cofactor is Zn(2+).

The catalysed reaction is Endonucleolytic cleavage of RNA, removing extra 3' nucleotides from tRNA precursor, generating 3' termini of tRNAs. A 3'-hydroxy group is left at the tRNA terminus and a 5'-phosphoryl group is left at the trailer molecule.. Its function is as follows. Zinc phosphodiesterase, which displays some tRNA 3'-processing endonuclease activity. Probably involved in tRNA maturation, by removing a 3'-trailer from precursor tRNA. In Saccharolobus islandicus (strain M.16.27) (Sulfolobus islandicus), this protein is Ribonuclease Z.